The following is a 224-amino-acid chain: LOB domain-containing protein 15 (224 aa).

The LOB domain maps to 44-145 (TPCAACKLLR…AELTAVRSEI (102 aa)). The interval 171–224 (SGGVSVIAPPPQRPTTPPQPTTAHPPSPSSCVFSQPTTRDLEYGNIESENNYFG) is disordered. A compositionally biased stretch (pro residues) spans 178–198 (APPPQRPTTPPQPTTAHPPSP).

It belongs to the LOB domain-containing protein family. Expressed in young shoots, roots, stems, leaves and flowers.

In Arabidopsis thaliana (Mouse-ear cress), this protein is LOB domain-containing protein 15 (LBD15).